Here is a 251-residue protein sequence, read N- to C-terminus: tRNA pseudouridine synthase A 1 (251 aa).

The Nucleophile role is filled by Asp-52. Tyr-110 is a binding site for substrate.

The protein belongs to the tRNA pseudouridine synthase TruA family. In terms of assembly, homodimer.

The catalysed reaction is uridine(38/39/40) in tRNA = pseudouridine(38/39/40) in tRNA. Its function is as follows. Formation of pseudouridine at positions 38, 39 and 40 in the anticodon stem and loop of transfer RNAs. This is tRNA pseudouridine synthase A 1 from Desulfotalea psychrophila (strain LSv54 / DSM 12343).